The primary structure comprises 357 residues: Probable cinnamyl alcohol dehydrogenase (357 aa).

Cys47 lines the Zn(2+) pocket. Thr49 serves as a coordination point for NADP(+). Residues His69, Glu70, Cys100, Cys103, Cys106, Cys114, and Cys163 each contribute to the Zn(2+) site. NADP(+) is bound by residues Thr167, Gly188–Gly193, Ser211–Lys216, Thr251, Gly275, and Ser298–Ile300.

The protein belongs to the zinc-containing alcohol dehydrogenase family. As to quaternary structure, homodimer. The cofactor is Zn(2+).

It carries out the reaction (E)-cinnamyl alcohol + NADP(+) = (E)-cinnamaldehyde + NADPH + H(+). The enzyme catalyses (E)-coniferol + NADP(+) = (E)-coniferaldehyde + NADPH + H(+). The catalysed reaction is (E)-sinapyl alcohol + NADP(+) = (E)-sinapaldehyde + NADPH + H(+). It catalyses the reaction (E)-4-coumaroyl alcohol + NADP(+) = (E)-4-coumaraldehyde + NADPH + H(+). It carries out the reaction (E)-caffeyl alcohol + NADP(+) = (E)-caffeyl aldehyde + NADPH + H(+). It functions in the pathway aromatic compound metabolism; phenylpropanoid biosynthesis. In terms of biological role, involved in lignin biosynthesis. Catalyzes the final step specific for the production of lignin monomers. Catalyzes the NADPH-dependent reduction of coniferaldehyde, 5-hydroxyconiferaldehyde, sinapaldehyde, 4-coumaraldehyde and caffeyl aldehyde to their respective alcohols. The sequence is that of Probable cinnamyl alcohol dehydrogenase from Populus deltoides (Eastern poplar).